Reading from the N-terminus, the 286-residue chain is Pyridoxal kinase PdxY (286 aa).

Substrate contacts are provided by residues Ser9 and 44–45 (TQ). ATP contacts are provided by residues Asp111, Ala143, Glu148, Lys181, and 208 to 211 (RPLV). Position 223 (Asp223) interacts with substrate.

Belongs to the pyridoxine kinase family. PdxY subfamily. Homodimer. The cofactor is Mg(2+).

It catalyses the reaction pyridoxal + ATP = pyridoxal 5'-phosphate + ADP + H(+). The protein operates within cofactor metabolism; pyridoxal 5'-phosphate salvage; pyridoxal 5'-phosphate from pyridoxal: step 1/1. Pyridoxal kinase involved in the salvage pathway of pyridoxal 5'-phosphate (PLP). Catalyzes the phosphorylation of pyridoxal to PLP. In Yersinia pestis bv. Antiqua (strain Antiqua), this protein is Pyridoxal kinase PdxY.